The chain runs to 445 residues: Maltoporin 2 (445 aa).

Residues 1–25 form the signal peptide; it reads MKMKAKWLPIAAAVTAALASQAAFA.

The protein belongs to the porin LamB (TC 1.B.3) family. In terms of assembly, homotrimer formed of three 18-stranded antiparallel beta-barrels, containing three independent channels.

The protein localises to the cell outer membrane. It carries out the reaction beta-maltose(in) = beta-maltose(out). In terms of biological role, involved in the transport of maltose and maltodextrins. This Aeromonas salmonicida (strain A449) protein is Maltoporin 2.